Here is an 803-residue protein sequence, read N- to C-terminus: Phenylalanine--tRNA ligase beta subunit (803 aa).

The tRNA-binding domain maps to 39–152 (TPGFQKVVAG…PDASPGADAA (114 aa)). Residues 406–480 (RQPVTIELRP…RLYGYNRIPV (75 aa)) enclose the B5 domain. Mg(2+)-binding residues include Asp458, Asp464, Glu467, and Glu468. The region spanning 709–802 (PRFPAVERDL…LEERLGASLR (94 aa)) is the FDX-ACB domain.

It belongs to the phenylalanyl-tRNA synthetase beta subunit family. Type 1 subfamily. In terms of assembly, tetramer of two alpha and two beta subunits. Mg(2+) serves as cofactor.

The protein resides in the cytoplasm. The enzyme catalyses tRNA(Phe) + L-phenylalanine + ATP = L-phenylalanyl-tRNA(Phe) + AMP + diphosphate + H(+). In Moorella thermoacetica (strain ATCC 39073 / JCM 9320), this protein is Phenylalanine--tRNA ligase beta subunit.